Consider the following 318-residue polypeptide: Aspartate carbamoyltransferase catalytic subunit (318 aa).

Carbamoyl phosphate is bound by residues Arg59 and Thr60. Lys87 provides a ligand contact to L-aspartate. 3 residues coordinate carbamoyl phosphate: Arg109, His137, and Gln140. The L-aspartate site is built by Arg170 and Arg224. 2 residues coordinate carbamoyl phosphate: Gly265 and Pro266.

It belongs to the aspartate/ornithine carbamoyltransferase superfamily. ATCase family. As to quaternary structure, heterododecamer (2C3:3R2) of six catalytic PyrB chains organized as two trimers (C3), and six regulatory PyrI chains organized as three dimers (R2).

It carries out the reaction carbamoyl phosphate + L-aspartate = N-carbamoyl-L-aspartate + phosphate + H(+). The protein operates within pyrimidine metabolism; UMP biosynthesis via de novo pathway; (S)-dihydroorotate from bicarbonate: step 2/3. Catalyzes the condensation of carbamoyl phosphate and aspartate to form carbamoyl aspartate and inorganic phosphate, the committed step in the de novo pyrimidine nucleotide biosynthesis pathway. The sequence is that of Aspartate carbamoyltransferase catalytic subunit from Rhizobium etli (strain CIAT 652).